The sequence spans 448 residues: Tubulin alpha chain (448 aa).

Gln-12, Glu-73, Ser-142, Gly-146, Thr-147, Thr-181, Asn-208, and Asn-230 together coordinate GTP. Position 73 (Glu-73) interacts with Mg(2+). Residue Glu-256 is part of the active site.

It belongs to the tubulin family. In terms of assembly, dimer of alpha and beta chains. A typical microtubule is a hollow water-filled tube with an outer diameter of 25 nm and an inner diameter of 15 nM. Alpha-beta heterodimers associate head-to-tail to form protofilaments running lengthwise along the microtubule wall with the beta-tubulin subunit facing the microtubule plus end conferring a structural polarity. Microtubules usually have 13 protofilaments but different protofilament numbers can be found in some organisms and specialized cells. Mg(2+) is required as a cofactor.

The protein resides in the cytoplasm. It is found in the cytoskeleton. The enzyme catalyses GTP + H2O = GDP + phosphate + H(+). Functionally, tubulin is the major constituent of microtubules, a cylinder consisting of laterally associated linear protofilaments composed of alpha- and beta-tubulin heterodimers. Microtubules grow by the addition of GTP-tubulin dimers to the microtubule end, where a stabilizing cap forms. Below the cap, tubulin dimers are in GDP-bound state, owing to GTPase activity of alpha-tubulin. The polypeptide is Tubulin alpha chain (TUB1) (Eremothecium gossypii (strain ATCC 10895 / CBS 109.51 / FGSC 9923 / NRRL Y-1056) (Yeast)).